Reading from the N-terminus, the 229-residue chain is Urease accessory protein UreF (229 aa).

It belongs to the UreF family. UreD, UreF and UreG form a complex that acts as a GTP-hydrolysis-dependent molecular chaperone, activating the urease apoprotein by helping to assemble the nickel containing metallocenter of UreC. The UreE protein probably delivers the nickel.

Its subcellular location is the cytoplasm. Required for maturation of urease via the functional incorporation of the urease nickel metallocenter. The protein is Urease accessory protein UreF of Staphylococcus aureus (strain MRSA252).